We begin with the raw amino-acid sequence, 498 residues long: MASQGTKRSYEQMETGGERQNATEIRSSVGRMVGGIGRFYIQMCTEFKLSDYEGRLIQNSITIERMVLSAFDERRNKYLEEHPSAGKDPKKTGGPIYRRRDGKWIRELILCDKEEIRRIWRQANNGEDATAGLTHLMIWHSNLNDATYQRTRALVRTGMDPRMCSLMQGSTLPRRSGAAGAAVKGVGTMVMELIRMIKRGINDRNFWRGENGRRTRIAYERMCNILKGKFQTAAQRAMMDQVRESRNPGNAEIEDLIFLARSALILRGSVAHKSCLPACVYGLAVASGYDFEKEGYSLVGIDPFRLLQNSQVFSLIRPNENSAHKSQLVWMACHSAAFEDLRVSSFIRGTKVVPRGKLSTRGVQIASNENMETMDSTTLELRSRYWAIRTRSGGNTNQQRASAGQISVQPTFSVQRNLPFERATIMAAFTGNTEGRTSDMRTEIIRMMESARPEDVSFQGRGVFELSDEKATNPIVPSFDMSNEGSYFFGDNAEEYDN.

The Unconventional nuclear localization signal motif lies at 1-18 (MASQGTKRSYEQMETGGE). Residues 1-22 (MASQGTKRSYEQMETGGERQNA) are disordered. Positions 198 to 216 (KRGINDRNFWRGENGRRTR) match the Bipartite nuclear localization signal motif.

This sequence belongs to the influenza viruses nucleoprotein family. In terms of assembly, homomultimerizes to form the nucleocapsid. May bind host exportin-1/XPO1. Binds to viral genomic RNA. Protein-RNA contacts are mediated by a combination of electrostatic interactions between positively charged residues and the phosphate backbone and planar interactions between aromatic side chains and bases. In terms of processing, late in virus-infected cells, may be cleaved from a 56-kDa protein to a 53-kDa protein by a cellular caspase. This cleavage might be a marker for the onset of apoptosis in infected cells or have a specific function in virus host interaction.

The protein localises to the virion. It localises to the host nucleus. In terms of biological role, encapsidates the negative strand viral RNA, protecting it from nucleases. The encapsidated genomic RNA is termed the ribonucleoprotein (RNP) and serves as template for transcription and replication. The RNP needs to be localized in the host nucleus to start an infectious cycle, but is too large to diffuse through the nuclear pore complex. NP comprises at least 2 nuclear localization signals that are responsible for the active RNP import into the nucleus through cellular importin alpha/beta pathway. Later in the infection, nclear export of RNPs are mediated through viral proteins NEP interacting with M1 which binds nucleoproteins. It is possible that nucleoprotein binds directly host exportin-1/XPO1 and plays an active role in RNPs nuclear export. M1 interaction with RNP seems to hide nucleoprotein's nuclear localization signals. Soon after a virion infects a new cell, M1 dissociates from the RNP under acidification of the virion driven by M2 protein. Dissociation of M1 from RNP unmasks nucleoprotein's nuclear localization signals, targeting the RNP to the nucleus. The chain is Nucleoprotein from Influenza A virus (strain A/Grey teal/Australia/2/1979 H4N4).